Reading from the N-terminus, the 801-residue chain is PR domain zinc finger protein 4 (801 aa).

Residues Lys412–Ser529 enclose the SET domain. The C2H2-type 1; atypical zinc finger occupies His545–His566. 4 C2H2-type zinc fingers span residues His618–His640, Tyr646–His668, Leu674–His696, and Ile702–His724. The segment at Tyr730–Cys752 adopts a C2H2-type 6; atypical zinc-finger fold. The tract at residues Thr751–Glu782 is disordered. The segment covering Pro762 to Ala776 has biased composition (acidic residues).

It belongs to the class V-like SAM-binding methyltransferase superfamily. In terms of tissue distribution, expressed in many tissues. Highly expressed in ovary, testis, pancreas, brain, heart and prostate.

It is found in the nucleus. In terms of biological role, may function as a transcription factor involved in cell differentiation. The polypeptide is PR domain zinc finger protein 4 (PRDM4) (Homo sapiens (Human)).